Reading from the N-terminus, the 221-residue chain is Oxaloacetate tautomerase FAHD1, mitochondrial (221 aa).

The transit peptide at 1-24 (MASTKPLSRFWEWGKNIVCVGRNY) directs the protein to the mitochondrion. Residue arginine 22 participates in oxalate binding. Residue serine 37 is modified to Phosphoserine. Positions 68, 70, and 99 each coordinate Mg(2+). Lysine 110 is modified (N6-acetyllysine). Position 112 is an N6-succinyllysine (lysine 112). Lysine 120 provides a ligand contact to oxalate.

Belongs to the FAH family. As to quaternary structure, homodimer. Mg(2+) serves as cofactor. It depends on Mn(2+) as a cofactor. Ubiquitous with higher expression in the liver and the kidney (at protein level).

The protein resides in the mitochondrion. Its subcellular location is the cytoplasm. The protein localises to the cytosol. It catalyses the reaction oxaloacetate = enol-oxaloacetate. The enzyme catalyses oxaloacetate + H(+) = pyruvate + CO2. It carries out the reaction a 3-acylpyruvate + H2O = a carboxylate + pyruvate + H(+). The catalysed reaction is acetylpyruvate + H2O = acetate + pyruvate + H(+). It catalyses the reaction 3-fumarylpyruvate + H2O = fumarate + pyruvate + H(+). With respect to regulation, oxaloacetate decarboxylation is potently and competitively inhibited by oxalate. Its function is as follows. Tautomerase that converts enol-oxaloacetate, a strong inhibitor of succinate dehydrogenase, to the physiological keto form of oxaloacetate. It is thereby required to maximize aerobic respiration efficiency by preventing succinate dehydrogenase inhibition. Also acts as a weak oxaloacetate decarboxylase (ODx), catalyzing the decarboxylation of oxaloacetate (OAA) to pyruvate and CO(2), and as such is likely a regulatory enzyme in the TCA cycle. Also displays acylpyruvase activity, being able to hydrolyze acetylpyruvate and fumarylpyruvate in vitro. In Mus musculus (Mouse), this protein is Oxaloacetate tautomerase FAHD1, mitochondrial.